Consider the following 420-residue polypeptide: Na(+)/H(+) antiporter NhaA (420 aa).

The next 11 helical transmembrane spans lie at 4–24 (VWNFITGYSLLLIGGAIIALI), 70–90 (DLLMALFFAIAAKEVWEAVIL), 104–124 (LVATLGGMVGPISIYLGIAYF), 132–152 (AVANGWAIPTATDIAFSYLVG), 165–185 (FLLLLAIADDAAGLLILAIFY), 192–212 (PAWLLLSFGAALGVYVLANWL), 233–250 (LSFWPYALAGCASWYGFM), 299–319 (VEIILGLFGLMNAGVAFSAMG), 323–343 (WLVLAGLLIGKPVGIFLFGWL), 361–381 (LVVIGCVAAIGFTVSLFVASV), and 395–415 (GALFSFGAAAVSIIVGKLTQV).

Belongs to the NhaA Na(+)/H(+) (TC 2.A.33) antiporter family.

It localises to the cell inner membrane. The catalysed reaction is Na(+)(in) + 2 H(+)(out) = Na(+)(out) + 2 H(+)(in). Na(+)/H(+) antiporter that extrudes sodium in exchange for external protons. The chain is Na(+)/H(+) antiporter NhaA from Jannaschia sp. (strain CCS1).